The primary structure comprises 356 residues: Protein ATP1B4 (356 aa).

The Nuclear segment spans residues 1–109 (MRRQLRSRRA…SLARTGQSRS (109 aa)). The segment at 32 to 77 (LADEEEEAEEEAQVMMVPGLEEEEEEEEGKEEEEEREEEEGQGQST) is disordered. Acidic residues-rich tracts occupy residues 33–43 (ADEEEEAEEEA) and 51–72 (LEEE…EEEG). A helical; Signal-anchor for type II membrane protein membrane pass occupies residues 110 to 130 (LILVIYFFFYASLAAVITLFI). Residues 131–356 (YMLFLAISPY…RIIFTLNIET (226 aa)) lie on the Perinuclear space side of the membrane.

This sequence belongs to the X(+)/potassium ATPases subunit beta family. In terms of assembly, does not associate with known Na,K-ATPase alpha-subunits. Associates with a SMAD7-transcriptional complex. Interacts with SNW1 and TOR1AIP1. In terms of tissue distribution, expressed in perinatal myocytes (at protein level). Expressed during postnatal development in skeletal muscle and heart.

Its subcellular location is the nucleus inner membrane. May act as a transcriptional coregulator during muscle development through its interaction with SNW1. Has lost its ancestral function as a Na,K-ATPase beta-subunit. This is Protein ATP1B4 (Atp1b4) from Rattus norvegicus (Rat).